Reading from the N-terminus, the 401-residue chain is Homoserine O-acetyltransferase (401 aa).

The AB hydrolase-1 domain occupies 37 to 358 (NAVLVCHALT…HGHDAFLVEP (322 aa)). The Nucleophile role is filled by S146. R215 provides a ligand contact to substrate. Residues D318 and H351 contribute to the active site. Substrate is bound at residue D352.

The protein belongs to the AB hydrolase superfamily. MetX family. Homodimer.

Its subcellular location is the cytoplasm. The enzyme catalyses L-homoserine + acetyl-CoA = O-acetyl-L-homoserine + CoA. It functions in the pathway amino-acid biosynthesis; L-methionine biosynthesis via de novo pathway; O-acetyl-L-homoserine from L-homoserine: step 1/1. Its function is as follows. Transfers an acetyl group from acetyl-CoA to L-homoserine, forming acetyl-L-homoserine. This Natronomonas pharaonis (strain ATCC 35678 / DSM 2160 / CIP 103997 / JCM 8858 / NBRC 14720 / NCIMB 2260 / Gabara) (Halobacterium pharaonis) protein is Homoserine O-acetyltransferase.